Consider the following 226-residue polypeptide: Orotate phosphoribosyltransferase (226 aa).

5-phospho-alpha-D-ribose 1-diphosphate is bound by residues R107, K108, K111, and 133–141; that span reads EDLTTDGGS. T137 provides a ligand contact to orotate.

Belongs to the purine/pyrimidine phosphoribosyltransferase family. PyrE subfamily. Homodimer. The cofactor is Mg(2+).

It carries out the reaction orotidine 5'-phosphate + diphosphate = orotate + 5-phospho-alpha-D-ribose 1-diphosphate. The protein operates within pyrimidine metabolism; UMP biosynthesis via de novo pathway; UMP from orotate: step 1/2. In terms of biological role, catalyzes the transfer of a ribosyl phosphate group from 5-phosphoribose 1-diphosphate to orotate, leading to the formation of orotidine monophosphate (OMP). The polypeptide is Orotate phosphoribosyltransferase (Dinoroseobacter shibae (strain DSM 16493 / NCIMB 14021 / DFL 12)).